A 293-amino-acid polypeptide reads, in one-letter code: 33 kDa chaperonin (293 aa).

2 disulfides stabilise this stretch: cysteine 231-cysteine 233 and cysteine 264-cysteine 267.

This sequence belongs to the HSP33 family. In terms of processing, under oxidizing conditions two disulfide bonds are formed involving the reactive cysteines. Under reducing conditions zinc is bound to the reactive cysteines and the protein is inactive.

The protein localises to the cytoplasm. Functionally, redox regulated molecular chaperone. Protects both thermally unfolding and oxidatively damaged proteins from irreversible aggregation. Plays an important role in the bacterial defense system toward oxidative stress. The chain is 33 kDa chaperonin from Yersinia pseudotuberculosis serotype O:1b (strain IP 31758).